The chain runs to 147 residues: Hemoglobin subunit beta-1 (147 aa).

Position 2 is an N-acetylserine (Ser2). A Globin domain is found at 3 to 147 (FLSAEEKGLV…VASALAHRYH (145 aa)). An N6-succinyllysine modification is found at Lys18. A phosphoserine mark is found at Ser45 and Ser51. Residue Lys60 is modified to N6-succinyllysine. His64 and His93 together coordinate heme b. The residue at position 105 (Arg105) is an Asymmetric dimethylarginine.

The protein belongs to the globin family. As to quaternary structure, heterotetramer of two alpha chains and two beta chains. Red blood cells.

Functionally, involved in oxygen transport from the lung to the various peripheral tissues. This chain is Hemoglobin subunit beta-1 (HBB1), found in Panthera onca (Jaguar).